An 85-amino-acid polypeptide reads, in one-letter code: Small ribosomal subunit protein bS20 (85 aa).

This sequence belongs to the bacterial ribosomal protein bS20 family.

Its function is as follows. Binds directly to 16S ribosomal RNA. The polypeptide is Small ribosomal subunit protein bS20 (Borreliella afzelii (strain PKo) (Borrelia afzelii)).